We begin with the raw amino-acid sequence, 114 residues long: Non-specific lipid-transfer protein 2 (114 aa).

The first 23 residues, 1–23, serve as a signal peptide directing secretion; sequence MEMFGKIACFVVFCMVVVAPHAE. Intrachain disulfides connect C27/C73, C37/C50, C51/C96, and C71/C110.

It belongs to the plant LTP family.

In terms of biological role, plant non-specific lipid-transfer proteins transfer phospholipids as well as galactolipids across membranes. May play a role in wax or cutin deposition in the cell walls of expanding epidermal cells and certain secretory tissues. The chain is Non-specific lipid-transfer protein 2 (LE16) from Solanum lycopersicum (Tomato).